The chain runs to 440 residues: Xylose isomerase (440 aa).

Catalysis depends on residues H101 and D104. Residues E232, E268, H271, D296, D307, D309, and D339 each contribute to the Mg(2+) site.

This sequence belongs to the xylose isomerase family. As to quaternary structure, homotetramer. The cofactor is Mg(2+).

The protein localises to the cytoplasm. The enzyme catalyses alpha-D-xylose = alpha-D-xylulofuranose. This chain is Xylose isomerase, found in Salmonella dublin (strain CT_02021853).